The chain runs to 250 residues: Non-specific acid phosphatase (250 aa).

Residues 1–20 (MKSRYLVFFLPLIVAKYTSA) form the signal peptide.

Belongs to the class A bacterial acid phosphatase family. In terms of assembly, homodimer.

The protein resides in the periplasm. It catalyses the reaction a phosphate monoester + H2O = an alcohol + phosphate. The protein is Non-specific acid phosphatase (phoN) of Salmonella typhimurium (strain LT2 / SGSC1412 / ATCC 700720).